A 326-amino-acid chain; its full sequence is Aspartate carbamoyltransferase catalytic subunit (326 aa).

Residues arginine 60 and threonine 61 each coordinate carbamoyl phosphate. Lysine 88 contributes to the L-aspartate binding site. 3 residues coordinate carbamoyl phosphate: arginine 110, histidine 143, and glutamine 146. L-aspartate is bound by residues arginine 183 and arginine 239. Residues glycine 280 and proline 281 each contribute to the carbamoyl phosphate site.

Belongs to the aspartate/ornithine carbamoyltransferase superfamily. ATCase family. As to quaternary structure, heterododecamer (2C3:3R2) of six catalytic PyrB chains organized as two trimers (C3), and six regulatory PyrI chains organized as three dimers (R2).

The catalysed reaction is carbamoyl phosphate + L-aspartate = N-carbamoyl-L-aspartate + phosphate + H(+). The protein operates within pyrimidine metabolism; UMP biosynthesis via de novo pathway; (S)-dihydroorotate from bicarbonate: step 2/3. In terms of biological role, catalyzes the condensation of carbamoyl phosphate and aspartate to form carbamoyl aspartate and inorganic phosphate, the committed step in the de novo pyrimidine nucleotide biosynthesis pathway. The sequence is that of Aspartate carbamoyltransferase catalytic subunit from Microcystis aeruginosa (strain NIES-843 / IAM M-2473).